The sequence spans 185 residues: Ribosome-recycling factor (185 aa).

Belongs to the RRF family.

It localises to the cytoplasm. Responsible for the release of ribosomes from messenger RNA at the termination of protein biosynthesis. May increase the efficiency of translation by recycling ribosomes from one round of translation to another. In Nitrosospira multiformis (strain ATCC 25196 / NCIMB 11849 / C 71), this protein is Ribosome-recycling factor.